We begin with the raw amino-acid sequence, 188 residues long: Transcription antitermination protein NusB (188 aa).

The tract at residues 154–188 (RAANPGAVSGSDAPVAPWDDSEELPAEDEAEDSRP) is disordered. Positions 172-188 (DDSEELPAEDEAEDSRP) are enriched in acidic residues.

It belongs to the NusB family.

Its function is as follows. Involved in transcription antitermination. Required for transcription of ribosomal RNA (rRNA) genes. Binds specifically to the boxA antiterminator sequence of the ribosomal RNA (rrn) operons. This is Transcription antitermination protein NusB from Corynebacterium efficiens (strain DSM 44549 / YS-314 / AJ 12310 / JCM 11189 / NBRC 100395).